Consider the following 702-residue polypeptide: Elongation factor G (702 aa).

Residues C8 to N290 form the tr-type G domain. Residues A17–T24, D88–H92, and N142–D145 contribute to the GTP site.

Belongs to the TRAFAC class translation factor GTPase superfamily. Classic translation factor GTPase family. EF-G/EF-2 subfamily.

The protein resides in the cytoplasm. Its function is as follows. Catalyzes the GTP-dependent ribosomal translocation step during translation elongation. During this step, the ribosome changes from the pre-translocational (PRE) to the post-translocational (POST) state as the newly formed A-site-bound peptidyl-tRNA and P-site-bound deacylated tRNA move to the P and E sites, respectively. Catalyzes the coordinated movement of the two tRNA molecules, the mRNA and conformational changes in the ribosome. The chain is Elongation factor G from Buchnera aphidicola subsp. Schizaphis graminum (strain Sg).